We begin with the raw amino-acid sequence, 121 residues long: Homeobox protein HD-6 (121 aa).

The homeobox DNA-binding region spans proline 28–tyrosine 87.

The protein resides in the nucleus. In Encephalitozoon cuniculi (strain GB-M1) (Microsporidian parasite), this protein is Homeobox protein HD-6 (HD-6).